The sequence spans 62 residues: Ubiquinol-cytochrome c reductase complex 6.7 kDa protein (62 aa).

Residues 2–25 (TSPAAAGNGLFKFLRPKLRPQSTD) lie on the Mitochondrial matrix side of the membrane. The chain crosses the membrane as a helical span at residues 26 to 44 (IQAAAGWGVAAVTGALWVI). Residues 45–62 (QPWDFLRKTFIEKQEEEK) are Mitochondrial intermembrane-facing.

The protein belongs to the UQCR11/QCR10 family. Component of the ubiquinol-cytochrome c oxidoreductase (cytochrome b-c1 complex, complex III, CIII), a multisubunit enzyme composed of 3 respiratory subunits cytochrome b, cytochrome c1 and Rieske protein, 2 core protein subunits, and additional low-molecular weight protein subunits. The complex exists as an obligatory dimer and forms supercomplexes (SCs) in the inner mitochondrial membrane with cytochrome c oxidase (complex IV, CIV).

It localises to the mitochondrion inner membrane. In terms of biological role, component of the ubiquinol-cytochrome c oxidoreductase, a multisubunit transmembrane complex that is part of the mitochondrial electron transport chain which drives oxidative phosphorylation. The respiratory chain contains 3 multisubunit complexes succinate dehydrogenase (complex II, CII), ubiquinol-cytochrome c oxidoreductase (cytochrome b-c1 complex, complex III, CIII) and cytochrome c oxidase (complex IV, CIV), that cooperate to transfer electrons derived from NADH and succinate to molecular oxygen, creating an electrochemical gradient over the inner membrane that drives transmembrane transport and the ATP synthase. The cytochrome b-c1 complex catalyzes electron transfer from ubiquinol to cytochrome c, linking this redox reaction to translocation of protons across the mitochondrial inner membrane, with protons being carried across the membrane as hydrogens on the quinol. In the process called Q cycle, 2 protons are consumed from the matrix, 4 protons are released into the intermembrane space and 2 electrons are passed to cytochrome c. QCR10 has a role in CIII assembly and RIP1 stability. In Solanum tuberosum (Potato), this protein is Ubiquinol-cytochrome c reductase complex 6.7 kDa protein.